We begin with the raw amino-acid sequence, 359 residues long: tRNA-specific 2-thiouridylase MnmA (359 aa).

ATP contacts are provided by residues 11 to 18 (GISGGVDS) and Ile-37. The active-site Nucleophile is Cys-99. A disulfide bond links Cys-99 and Cys-195. Gly-123 is a binding site for ATP. An interaction with tRNA region spans residues 145–147 (KDQ). Cys-195 functions as the Cysteine persulfide intermediate in the catalytic mechanism. The tract at residues 304-305 (RY) is interaction with tRNA.

The protein belongs to the MnmA/TRMU family.

It is found in the cytoplasm. It catalyses the reaction S-sulfanyl-L-cysteinyl-[protein] + uridine(34) in tRNA + AH2 + ATP = 2-thiouridine(34) in tRNA + L-cysteinyl-[protein] + A + AMP + diphosphate + H(+). In terms of biological role, catalyzes the 2-thiolation of uridine at the wobble position (U34) of tRNA, leading to the formation of s(2)U34. The sequence is that of tRNA-specific 2-thiouridylase MnmA from Chlorobium phaeobacteroides (strain BS1).